Reading from the N-terminus, the 162-residue chain is Phosphopantetheine adenylyltransferase (162 aa).

A substrate-binding site is contributed by threonine 9. Residues 9-10 (TF) and histidine 17 each bind ATP. 3 residues coordinate substrate: lysine 41, leucine 76, and arginine 90. ATP-binding positions include 91 to 93 (GLR), glutamate 101, and 126 to 132 (HQAIASR).

It belongs to the bacterial CoaD family. In terms of assembly, homohexamer. It depends on Mg(2+) as a cofactor.

The protein resides in the cytoplasm. The enzyme catalyses (R)-4'-phosphopantetheine + ATP + H(+) = 3'-dephospho-CoA + diphosphate. It functions in the pathway cofactor biosynthesis; coenzyme A biosynthesis; CoA from (R)-pantothenate: step 4/5. Functionally, reversibly transfers an adenylyl group from ATP to 4'-phosphopantetheine, yielding dephospho-CoA (dPCoA) and pyrophosphate. The sequence is that of Phosphopantetheine adenylyltransferase from Caulobacter sp. (strain K31).